A 1220-amino-acid polypeptide reads, in one-letter code: MIDVNKFESMQIGLASPDKIRSWSYGEVKKPETINYRTLKPERDGLFDERIFGPTKDWECACGKYKRIRYKGIVCDRCGVEVTRSKVRRERMGHIELAAPVTHIWYFKGIPSRMGLVLDMSPRSLEEIIYFASYVVIDPGDTPMEKKQLLTEREYREKREEYGQTFNAKMGAEAIKELLQDVELDKEVAELKEDLKSAQGQKRTRAIRRLDILDAFKESGNDPAWMVMDTIPVIPPDLRPMVQLEGGRFATSDLNDLYRRVINRNNRLKRLLDLNAPSIIVQNEKRMLQEAVDALIDNGRRGRPVTGPGNRPLKSLSHMLKGKQGRFRQNLLGKRVDYSGRSVIDVGPWLKFYQCGVPREMALELFKPFVMRELVKRDMASNIKNARRKIDRQDDDVWDVLEDVIKERPVLLNRAPTLHRLGIQAFEPVLVDGKSIRLHPLVCEAYNADFDGDQMAIHVPLSDEAMAEARMLMLAAHHILAPKDGKPIVTPSQDVVLGNYYLTMEQKGREGEGMIFKDTNEVLMALQNGYVHLHSRIGIATNSFTDKPFTDDQKQKIMVTSVGKAIFNEIMPKDFPYLNEPTQDNIVNGVPDKYFIDKGEDINDYLEDAPLIDPFKKGFLSDIIAQVFKVYKVQRTSDLLDDMKTLGYTQSTNSGLTVGIADITNLKEKPEIVEAAHKKVATVSKQFRRGLITDEERHDRVIQIWNDAKDDIQQKLVDSFDPNNPISMMSDSGARGNISNFTQLAGMRGLMAAPNGGMMEVPVISNFREGLSVMEMFMSTHGARKGMTDTALKTADSGYLTRRLVDVAQDVIVREEDCGTDRGLVVSAIREGNEMIEPLYDRLVGRFTMKDVLDPKSGEVLVKRNTLMDEDTAQMIVDAGVESVTIRSVFTCNTKHGVCQKCYGRNMATGEQVEVGEAVGTVAAQSIGEPGTQLTMRNFHTGGVAGGEDITQGLPRVQEIFEARNPKGEAVITEVTGEITAIDENPAEHTREITVKGETDTRTYSVPYASSVAVAEGDHINRGERLTGGSIDPKQLIKVRDVMATENYLLSEVQKVYRMQGVDIGDKHVEVMVRQMLRKIRVMDPGDTNILPGTLLDIADFKEKNTQAIISGGIPATGRPVLLGITKASLETNSFLSAASFQETTRVLTDASIRGKNDPLIGLKENVIIGKIIPAGTGMATYRHEEPKSVGTVSDSVYSISDIEKQMKAKDGQQGDTDKK.

The Zn(2+) site is built by cysteine 60, cysteine 62, cysteine 75, and cysteine 78. Mg(2+) is bound by residues aspartate 449, aspartate 451, and aspartate 453. Zn(2+) is bound by residues cysteine 818, cysteine 892, cysteine 899, and cysteine 902.

The protein belongs to the RNA polymerase beta' chain family. As to quaternary structure, the RNAP catalytic core consists of 2 alpha, 1 beta, 1 beta' and 1 omega subunit. When a sigma factor is associated with the core the holoenzyme is formed, which can initiate transcription. Mg(2+) is required as a cofactor. It depends on Zn(2+) as a cofactor.

The enzyme catalyses RNA(n) + a ribonucleoside 5'-triphosphate = RNA(n+1) + diphosphate. Functionally, DNA-dependent RNA polymerase catalyzes the transcription of DNA into RNA using the four ribonucleoside triphosphates as substrates. This chain is DNA-directed RNA polymerase subunit beta', found in Lacticaseibacillus paracasei (strain ATCC 334 / BCRC 17002 / CCUG 31169 / CIP 107868 / KCTC 3260 / NRRL B-441) (Lactobacillus paracasei).